A 196-amino-acid polypeptide reads, in one-letter code: Adenine phosphoribosyltransferase (196 aa).

It belongs to the purine/pyrimidine phosphoribosyltransferase family. As to quaternary structure, homodimer.

The protein resides in the cytoplasm. The enzyme catalyses AMP + diphosphate = 5-phospho-alpha-D-ribose 1-diphosphate + adenine. The protein operates within purine metabolism; AMP biosynthesis via salvage pathway; AMP from adenine: step 1/1. Catalyzes a salvage reaction resulting in the formation of AMP, that is energically less costly than de novo synthesis. In Methylibium petroleiphilum (strain ATCC BAA-1232 / LMG 22953 / PM1), this protein is Adenine phosphoribosyltransferase.